Reading from the N-terminus, the 262-residue chain is Hydroxyethylthiazole kinase (262 aa).

Residue methionine 43 participates in substrate binding. Residues arginine 118 and threonine 164 each coordinate ATP. Alanine 191 lines the substrate pocket.

Belongs to the Thz kinase family. It depends on Mg(2+) as a cofactor.

The catalysed reaction is 5-(2-hydroxyethyl)-4-methylthiazole + ATP = 4-methyl-5-(2-phosphooxyethyl)-thiazole + ADP + H(+). It functions in the pathway cofactor biosynthesis; thiamine diphosphate biosynthesis; 4-methyl-5-(2-phosphoethyl)-thiazole from 5-(2-hydroxyethyl)-4-methylthiazole: step 1/1. Functionally, catalyzes the phosphorylation of the hydroxyl group of 4-methyl-5-beta-hydroxyethylthiazole (THZ). This chain is Hydroxyethylthiazole kinase, found in Cereibacter sphaeroides (strain ATCC 17023 / DSM 158 / JCM 6121 / CCUG 31486 / LMG 2827 / NBRC 12203 / NCIMB 8253 / ATH 2.4.1.) (Rhodobacter sphaeroides).